We begin with the raw amino-acid sequence, 235 residues long: Proteasome subunit alpha type-2 (235 aa).

It belongs to the peptidase T1A family. In terms of assembly, the 26S proteasome consists of a 20S proteasome core and two 19S regulatory subunits. The 20S proteasome core is composed of 28 subunits that are arranged in four stacked rings, resulting in a barrel-shaped structure. The two end rings are each formed by seven alpha subunits, and the two central rings are each formed by seven beta subunits. The catalytic chamber with the active sites is on the inside of the barrel.

The protein localises to the cytoplasm. The protein resides in the nucleus. Functionally, the proteasome is a multicatalytic proteinase complex which is characterized by its ability to cleave peptides with Arg, Phe, Tyr, Leu, and Glu adjacent to the leaving group at neutral or slightly basic pH. The proteasome has an ATP-dependent proteolytic activity. This is Proteasome subunit alpha type-2 (PAB1) from Oryza sativa subsp. indica (Rice).